Reading from the N-terminus, the 121-residue chain is uncharacterized protein (121 aa).

Positions 47–101 (SEVPHYHAEHDLTFTVLKGKGELYLEGEKKKLKEGDWAFIPKGAVHFYRNTSELS) constitute a Cupin type-2 domain.

This is an uncharacterized protein from Aquifex aeolicus (strain VF5).